The sequence spans 100 residues: MHLSPREKDKLLVAMAAMVARRRLERGVKLNYPESIALISDYVVEGARDGRSVAELMQAGATVLRREQVMEGIAEMIHEIQVEATFPDGTKLVTVHNPIR.

The protein belongs to the urease gamma subunit family. As to quaternary structure, heterotrimer of UreA (gamma), UreB (beta) and UreC (alpha) subunits. Three heterotrimers associate to form the active enzyme.

It is found in the cytoplasm. It carries out the reaction urea + 2 H2O + H(+) = hydrogencarbonate + 2 NH4(+). The protein operates within nitrogen metabolism; urea degradation; CO(2) and NH(3) from urea (urease route): step 1/1. This Magnetococcus marinus (strain ATCC BAA-1437 / JCM 17883 / MC-1) protein is Urease subunit gamma.